The chain runs to 251 residues: Hydroxyacylglutathione hydrolase (251 aa).

The Zn(2+) site is built by His53, His55, Asp57, His58, His110, Asp127, and His165.

This sequence belongs to the metallo-beta-lactamase superfamily. Glyoxalase II family. Monomer. It depends on Zn(2+) as a cofactor.

The catalysed reaction is an S-(2-hydroxyacyl)glutathione + H2O = a 2-hydroxy carboxylate + glutathione + H(+). It participates in secondary metabolite metabolism; methylglyoxal degradation; (R)-lactate from methylglyoxal: step 2/2. Thiolesterase that catalyzes the hydrolysis of S-D-lactoyl-glutathione to form glutathione and D-lactic acid. In Yersinia enterocolitica serotype O:8 / biotype 1B (strain NCTC 13174 / 8081), this protein is Hydroxyacylglutathione hydrolase.